Here is a 168-residue protein sequence, read N- to C-terminus: Pollen allergen Cro s 1 (168 aa).

Residues 1–26 form the signal peptide; it reads MGKCQAVFLLVGALCVLSLAGVANAA. Intrachain disulfides connect C38–C109, C41–C153, and C62–C97. N64 carries N-linked (GlcNAc...) asparagine glycosylation.

The protein belongs to the Ole e I family. In terms of tissue distribution, expressed in pollen.

It is found in the secreted. This Crocus sativus (Saffron) protein is Pollen allergen Cro s 1.